The primary structure comprises 176 residues: Disulfide bond formation protein B (176 aa).

Over 1-14 (MLQFLNRCSKGRGA) the chain is Cytoplasmic. The helical transmembrane segment at 15–31 (WLLMALTALVLELVALY) threads the bilayer. Residues 32-49 (FQHVMLLQPCVMCIYERA) are Periplasmic-facing. A disulfide bridge connects residues Cys41 and Cys44. The chain crosses the membrane as a helical span at residues 50–65 (ALFGILGASLLGAIAP). Over 66–71 (KSPLRY) the chain is Cytoplasmic. The chain crosses the membrane as a helical span at residues 72–89 (LAIFIWIYSAWKGVQLAW). At 90–144 (THTMLQLHPSPFTTCDFFVSFPSWLPLDKWFPAVFVASGDCAVKQWEFLSLEMPQ) the chain is on the periplasmic side. Cys104 and Cys130 are oxidised to a cystine. Residues 145–163 (WLVGIFAAYLFIAILVLIS) form a helical membrane-spanning segment. Residues 164–176 (QFVKPKRRDLFSR) are Cytoplasmic-facing.

The protein belongs to the DsbB family.

It localises to the cell inner membrane. In terms of biological role, required for disulfide bond formation in some periplasmic proteins. Acts by oxidizing the DsbA protein. This chain is Disulfide bond formation protein B, found in Yersinia enterocolitica serotype O:8 / biotype 1B (strain NCTC 13174 / 8081).